The sequence spans 600 residues: Elongation factor 4 (600 aa).

The tr-type G domain maps to 4–186 (SKIRNFSIIA…AIVEKIPSPS (183 aa)). GTP is bound by residues 16-21 (DHGKST) and 133-136 (NKID).

It belongs to the TRAFAC class translation factor GTPase superfamily. Classic translation factor GTPase family. LepA subfamily.

The protein localises to the cell membrane. It catalyses the reaction GTP + H2O = GDP + phosphate + H(+). Functionally, required for accurate and efficient protein synthesis under certain stress conditions. May act as a fidelity factor of the translation reaction, by catalyzing a one-codon backward translocation of tRNAs on improperly translocated ribosomes. Back-translocation proceeds from a post-translocation (POST) complex to a pre-translocation (PRE) complex, thus giving elongation factor G a second chance to translocate the tRNAs correctly. Binds to ribosomes in a GTP-dependent manner. This is Elongation factor 4 from Mycoplasma mycoides subsp. mycoides SC (strain CCUG 32753 / NCTC 10114 / PG1).